Here is a 410-residue protein sequence, read N- to C-terminus: Platelet-activating factor acetylhydrolase IB subunit beta (410 aa).

A required for self-association and interaction with PAFAH1B2 and PAFAH1B3 region spans residues 1–38 (MVLSQRQRDELNRAIADYLRSNGYEEAYSVFKKEAELD). The interval 1-66 (MVLSQRQRDE…SVIRLQKKVM (66 aa)) is interaction with NDE1. Residues 1–102 (MVLSQRQRDE…EWIPRPPEKY (102 aa)) are interaction with NDEL1. Residues 7–39 (QRDELNRAIADYLRSNGYEEAYSVFKKEAELDV) form the LisH domain. Lysine 53 carries the N6-acetyllysine modification. The stretch at 56–82 (TSVIRLQKKVMELESKLNEAKEEFTSG) forms a coiled coil. Residues 83 to 410 (GPLGQKRDPK…DQTVKVWECR (328 aa)) form an interaction with dynein and dynactin region. WD repeat units lie at residues 106-147 (GHRS…RTLK), 148-187 (GHTD…CIRT), 190-229 (GHDH…CVKT), 232-271 (GHRE…CKAE), 274-333 (EHEH…CLMT), 336-377 (GHDN…KTLN), and 378-410 (AHEH…WECR). The residue at position 109 (serine 109) is a Phosphoserine. Residues 367–409 (YKNKRCMKTLNAHEHFVTSLDFHKTAPYVVTGSVDQTVKVWEC) are interaction with DCX. The interaction with NDEL1 stretch occupies residues 388-410 (FHKTAPYVVTGSVDQTVKVWECR).

The protein belongs to the WD repeat LIS1/nudF family. As to quaternary structure, component of the cytosolic PAF-AH (I) heterotetrameric enzyme, which is composed of PAFAH1B1 (beta), PAFAH1B2 (alpha2) and PAFAH1B3 (alpha1) subunits. The catalytic activity of the enzyme resides in the alpha1 (PAFAH1B3) and alpha2 (PAFAH1B2) subunits, whereas the beta subunit (PAFAH1B1) has regulatory activity. Trimer formation is not essential for the catalytic activity. Interacts with the catalytic dimer of PAF-AH (I) heterotetrameric enzyme: interacts with PAFAH1B2 homodimer (alpha2/alpha2 homodimer), PAFAH1B3 homodimer (alpha1/alpha1 homodimer) and PAFAH1B2-PAFAH1B3 heterodimer (alpha2/alpha1 heterodimer). Interacts with IQGAP1, KATNB1 and NUDC. Interacts with DAB1 when DAB1 is phosphorylated in response to RELN/reelin signaling. Can self-associate. Interacts with DCX, dynein, dynactin, NDE1, NDEL1 and RSN. Interacts with DISC1, and this interaction is enhanced by NDEL1. Interacts with INTS13. Interacts with DCDC1. In terms of tissue distribution, fairly ubiquitous expression in both the frontal and occipital areas of the brain.

The protein localises to the cytoplasm. Its subcellular location is the cytoskeleton. The protein resides in the microtubule organizing center. It is found in the centrosome. It localises to the spindle. The protein localises to the nucleus membrane. Regulatory subunit (beta subunit) of the cytosolic type I platelet-activating factor (PAF) acetylhydrolase (PAF-AH (I)), an enzyme that catalyzes the hydrolyze of the acetyl group at the sn-2 position of PAF and its analogs and participates in PAF inactivation. Regulates the PAF-AH (I) activity in a catalytic dimer composition-dependent manner. Required for proper activation of Rho GTPases and actin polymerization at the leading edge of locomoting cerebellar neurons and postmigratory hippocampal neurons in response to calcium influx triggered via NMDA receptors. Positively regulates the activity of the minus-end directed microtubule motor protein dynein. May enhance dynein-mediated microtubule sliding by targeting dynein to the microtubule plus end. Required for several dynein- and microtubule-dependent processes such as the maintenance of Golgi integrity, the peripheral transport of microtubule fragments and the coupling of the nucleus and centrosome. Required during brain development for the proliferation of neuronal precursors and the migration of newly formed neurons from the ventricular/subventricular zone toward the cortical plate. Neuronal migration involves a process called nucleokinesis, whereby migrating cells extend an anterior process into which the nucleus subsequently translocates. During nucleokinesis dynein at the nuclear surface may translocate the nucleus towards the centrosome by exerting force on centrosomal microtubules. May also play a role in other forms of cell locomotion including the migration of fibroblasts during wound healing. Required for dynein recruitment to microtubule plus ends and BICD2-bound cargos. May modulate the Reelin pathway through interaction of the PAF-AH (I) catalytic dimer with VLDLR. This Homo sapiens (Human) protein is Platelet-activating factor acetylhydrolase IB subunit beta.